A 58-amino-acid chain; its full sequence is Small ribosomal subunit protein bS21 (58 aa).

Belongs to the bacterial ribosomal protein bS21 family.

The sequence is that of Small ribosomal subunit protein bS21 from Staphylococcus aureus (strain bovine RF122 / ET3-1).